The chain runs to 60 residues: Small ribosomal subunit protein bS21 (60 aa).

Residues Glu-39 to Arg-60 are disordered. A compositionally biased stretch (basic residues) spans Lys-44 to Arg-60.

Belongs to the bacterial ribosomal protein bS21 family.

The chain is Small ribosomal subunit protein bS21 from Microcystis aeruginosa (strain NIES-843 / IAM M-2473).